A 598-amino-acid chain; its full sequence is Acetylcholine receptor subunit alpha-type acr-5 (598 aa).

A signal peptide spans 1 to 16; the sequence is MLPNIILILLIRYCSC. Residues 17–323 are Extracellular-facing; sequence GAGSRVYEKY…HLVIRRKPLY (307 aa). 6 N-linked (GlcNAc...) asparagine glycosylation sites follow: Asn54, Asn71, Asn77, Asn134, Asn178, and Asn252. The chain crosses the membrane as a helical span at residues 324–344; that stretch reads YMINLVVPTSIITIVAVTGFF. Residues 345-356 lie on the Cytoplasmic side of the membrane; sequence TPTSSSSERDEK. Residues 357 to 377 form a helical membrane-spanning segment; that stretch reads LYLGINTLLTMSVMMLMVCNQ. At 378-391 the chain is on the extracellular side; it reads MPSTSTYVPLMSWY. Residues 392–412 traverse the membrane as a helical segment; the sequence is YIGIIMVIVVGTFLATGVLAI. Residues 413–563 lie on the Cytoplasmic side of the membrane; the sequence is HGQKHYNKPI…WEFLANVLDR (151 aa). The chain crosses the membrane as a helical span at residues 564-584; that stretch reads ILLTIFCGFTFAVFIILIGFD. At 585–598 the chain is on the extracellular side; that stretch reads SFFTFHTDSPPKTM.

This sequence belongs to the ligand-gated ion channel (TC 1.A.9) family. Acetylcholine receptor (TC 1.A.9.1) subfamily.

Its subcellular location is the postsynaptic cell membrane. It is found in the cell membrane. Subunit of nicotinic acetylcholine receptor (nAChR). Involved in nAChR sensitivity to nicotine. Modulates locomotion towards the drug nicotine. This chain is Acetylcholine receptor subunit alpha-type acr-5, found in Caenorhabditis elegans.